Here is a 396-residue protein sequence, read N- to C-terminus: Elongation factor Tu (396 aa).

Residues 10-207 enclose the tr-type G domain; that stretch reads KPHCNIGTIG…VDAYIPQPPR (198 aa). A G1 region spans residues 19 to 26; sequence GHVDHGKT. 19–26 provides a ligand contact to GTP; that stretch reads GHVDHGKT. T26 provides a ligand contact to Mg(2+). Positions 60 to 64 are G2; it reads GITIS. The G3 stretch occupies residues 81–84; it reads DCPG. Residues 81-85 and 136-139 contribute to the GTP site; these read DCPGH and NKVD. The tract at residues 136–139 is G4; sequence NKVD. The tract at residues 174 to 176 is G5; that stretch reads SAL.

It belongs to the TRAFAC class translation factor GTPase superfamily. Classic translation factor GTPase family. EF-Tu/EF-1A subfamily. In terms of assembly, monomer.

It is found in the cytoplasm. It carries out the reaction GTP + H2O = GDP + phosphate + H(+). Its function is as follows. GTP hydrolase that promotes the GTP-dependent binding of aminoacyl-tRNA to the A-site of ribosomes during protein biosynthesis. This is Elongation factor Tu from Novosphingobium aromaticivorans (strain ATCC 700278 / DSM 12444 / CCUG 56034 / CIP 105152 / NBRC 16084 / F199).